Consider the following 237-residue polypeptide: Lectin alpha chain (237 aa).

Mn(2+) is bound by residues E8 and D10. Ca(2+) is bound by residues D10, Y12, N14, and D19. Residue Y12 coordinates a carbohydrate. D19 and H24 together coordinate Mn(2+). Position 99-100 (99-100 (LY)) interacts with a carbohydrate. A Ca(2+)-binding site is contributed by D208. R228 is an a carbohydrate binding site.

Belongs to the leguminous lectin family. In terms of assembly, equilibrium between homodimer and homotetramer. Oligomerization is pH-dependent with homotetramers forming at pH 6.5 and above. Post-translationally, the beta and gamma chains are produced by partial proteolytic processing of the lectin alpha chain by an asparaginyl endopeptidase. Mixture of 60% alpha lectin and 40% of its beta and gamma proteolytic fragments. In terms of tissue distribution, seed.

The protein localises to the vacuole. The protein resides in the aleurone grain. In terms of biological role, D-mannose/D-glucose-binding lectin. Has anti-inflammatory activity in rats. Induces histamine release in mast cells from hamster and rat. Induces lymphocyte proliferation and IFNG production. Shows toxicity against the aquatic snail B.glabrata at concentrations higher than 20 ug/ml. This is Lectin alpha chain from Dioclea virgata.